Consider the following 1828-residue polypeptide: MANSTGKAPPDERRKGLAFLDELRQFHHSRGSPFKKIPAVGGKELDLHGLYTRVTTLGGFAKVSEKNQWGEIVEEFNFPRSCSNAAFALKQYYLRYLEKYEKVHHFGEDDDEVPPGNPKPQLPIGAIPSSYNYQQHSVSDYLRQSYGLSMDFNSPNDYNKLVLSLLSGLPNEVDFAINVCTLLSNESKHVMQLEKDPKIITLLLANAGVFDDTLGSFSSVFGEEWREKTDRDFVKFWKDIVDDNEVRDLISDRNKAHEDTPGEWIWESLFHPPRKLGINDIEGQRVLQIAVILRNLSFEESNVKLLAANRTCLRFLLLSAHSHFISLRQLGLDTLGNIAAELLLDPVDFRTTHLMFHTVTKCLMSRDRFLKMRGMEILGNLCKAEDNGVLICEYVDQDSYREIICHLTLPDVLLVTSTLEVLYMLTEMGDVACTKIAKVEKSIDVLVCLVSMDAQMFGPDALAAVKLIEHPSSSHQVLSEIRPQAIEQVQTQTHIASGPASRAVVAQHAAPPPGIVEIDSEKFACQWLNAHFEVNPDCSVSRAEMYSEYLSTCSKLARGGILTSTGFYKCLRTVFPNHTVKRVEDSTSSGQAHIHVIGVKRRALPLPIQMYYQQQPISTPVVRVDAVADLSPTPSPAGIPHGPQAAGNHFQRTPVTNQSSNLTATQMSFPVQGIHTVAQTVSRIPPNPSVHTHQQQNSPVTVIQNKAPIPCEVVKATVIQNSVPQTAVPVSISVGGAPAQNSVGQNHSAGPQPVTVVNSQTLLHHPSVMPQPSPLHTVVPGQVPSGTPVTVIQQTVPQSRMFGRVQSIPACTSTVSQGQQLITTSPQPMHTSSQQTAAGSQPQDTVIIAPPQYVTTSASNIVSATSVQNFQVATGQVVTIAGVPSPQPSRVGFQNIAPKPLPSQQVSPSVVQQPIQQPQQPAQQSVVIVSQPAQQGQAYAPAIHQIVLANPAALPAGQTVQLTGQPNITPSSSPSPVPPTNNQVPTAMSSSSTLQSQGPPPTVSQMLSVKRQQQQQHSPAAPAQQVQVQVQQPQQVQVQVQPQQPSAGVGQPAPNESSLIKQLLLPKRGPSTPGGKLILPAPQIPPPNNARAPSPQVVYQVANNQAAGFGVQGQTPAQQLLVGQQNVQLVQSAMPPAGGVQTVPISNLQILPGPLISNSPATIFQGTSGNQVTITVVPNTSFATATVSQGNAAQLIAPAGLSMSGAQASAGLQVQTLPAGQSACTTAPLPFKGDKIICQKEEEAKEATGLHVHERKIEVMENPSCRRGTTNTSNGDTSESELQVGSLLNGRKYSDSSLPPSNSGKLQSETSQCSLISNGPSLELGENGAPGKQNSEPVDMQDVKGDLKKALVNGICDFDKGDGSHLSKNIPNHKTSNHVGNGEISPVEPQGTSGATQQDTAKGDQLERVSNGPVLTLGGSPSTSSMQEAPSVATPPLSGTDLPNGPLASSLNSDVPQQRPSVVVSPHSTAPVIQGHQVIAVPHSGPRVTPSALSSDARSTNGTAECKTVKRPAEDNDRDTVPGIPNKVGVRIVTISDPNNAGCSATMVAVPAGADPSTVAKVAIESAAQQKQQHPPTYMQSVAPQNTPMPPSPAVQVQGQPSSSQPSPVSASSQHADPVRKPGQNFMCLWQSCKKWFQTPSQVFYHAATEHGGKDVYPGQCLWEGCEPFQRQRFSFITHLQDKHCSKDALLAGLKQDEPGQVANQKSSTKQPTVGGTGSAPRAQKAIASHPSAALMALRRGSRNLVFRDFTDEKEGPITKHIRLTAALILKNIGKYSECGRRLLKRHENNLSVLAISNMEASSTLAKCLYELNFTVQSKEQEKDSEML.

Ala-2 is modified (N-acetylalanine). Ser-4 carries the phosphoserine modification. Residues Lys-7, Lys-15, and Lys-119 each participate in a glycyl lysine isopeptide (Lys-Gly) (interchain with G-Cter in SUMO2) cross-link. The 93-residue stretch at 13 to 105 (RRKGLAFLDE…YLEKYEKVHH (93 aa)) folds into the ARID domain. The short motif at 313-317 (LRFLL) is the LXXLL element. A DNA-binding region (RFX-type winged-helix) is located at residues 524 to 603 (ACQWLNAHFE…IHVIGVKRRA (80 aa)). Lys-555 is covalently cross-linked (Glycyl lysine isopeptide (Lys-Gly) (interchain with G-Cter in SUMO2)). Phosphoserine occurs at positions 631 and 635. Residue Thr-653 is modified to Phosphothreonine. Ser-689 carries the phosphoserine modification. Position 692 is a phosphothreonine (Thr-692). 6 disordered regions span residues 824-843 (TSPQ…SQPQ), 962-1028 (LTGQ…QVQV), 1245-1339 (KEAT…EPVD), 1360-1462 (KGDG…RPSV), 1483-1503 (HSGP…TNGT), and 1566-1618 (SAAQ…HADP). Residues 987–1011 (AMSSSSTLQSQGPPPTVSQMLSVKR) show a composition bias toward polar residues. Low complexity predominate over residues 1012 to 1028 (QQQQQHSPAAPAQQVQV). Residues 1245–1259 (KEATGLHVHERKIEV) are compositionally biased toward basic and acidic residues. Residues 1267-1283 (RGTTNTSNGDTSESELQ) are compositionally biased toward polar residues. A Phosphoserine modification is found at Ser-1294. 2 stretches are compositionally biased toward polar residues: residues 1295-1320 (DSSL…SNGP) and 1366-1379 (LSKN…SNHV). The residue at position 1385 (Ser-1385) is a Phosphoserine. Composition is skewed to polar residues over residues 1390–1400 (QGTSGATQQDT) and 1419–1428 (GSPSTSSMQE). The span at 1453–1462 (SDVPQQRPSV) shows a compositional bias: low complexity. Ser-1491 is modified (phosphoserine). Composition is skewed to polar residues over residues 1491–1503 (SALS…TNGT) and 1567–1586 (AAQQ…APQN). Over residues 1594–1614 (AVQVQGQPSSSQPSPVSASSQ) the composition is skewed to low complexity. The segment at 1626–1651 (FMCLWQSCKKWFQTPSQVFYHAATEH) adopts a C2H2-type zinc-finger fold. Glycyl lysine isopeptide (Lys-Gly) (interchain with G-Cter in SUMO2) cross-links involve residues Lys-1695, Lys-1710, and Lys-1725. The tract at residues 1697 to 1726 (DEPGQVANQKSSTKQPTVGGTGSAPRAQKA) is disordered. The span at 1702–1714 (VANQKSSTKQPTV) shows a compositional bias: polar residues.

Belongs to the RFX family. In terms of assembly, component of the SWI/SNF-B (PBAF) chromatin remodeling complex, at least composed of SMARCA4/BRG1, SMARCB1/BAF47/SNF5, ACTL6A/BAF53A or ACTL6B/BAF53B, SMARCE1/BAF57, SMARCD1/BAF60A, SMARCD2/BAF60B, perhaps SMARCD3/BAF60C, SMARCC1/BAF155, SMARCC2/BAF170, PBRM1/BAF180, ARID2/BAF200 and actin. Interacts with SRF. Forms complexes with SRF and SRF cofactors MYOCD, NKX2-5 and SRFBP1. Highly expressed in testis, expressed in heart, liver and kidney.

The protein resides in the nucleus. Functionally, involved in transcriptional activation and repression of select genes by chromatin remodeling (alteration of DNA-nucleosome topology). Required for the stability of the SWI/SNF chromatin remodeling complex SWI/SNF-B (PBAF). May be involved in targeting the complex to different genes. May be involved in regulating transcriptional activation of cardiac genes. This is AT-rich interactive domain-containing protein 2 from Mus musculus (Mouse).